A 334-amino-acid polypeptide reads, in one-letter code: Protein-glutamate methylesterase/protein-glutamine glutaminase 1 (334 aa).

In terms of domain architecture, Response regulatory spans 2 to 120 (NIGIVNDLPL…GAAGDTTKLL (119 aa)). 4-aspartylphosphate is present on aspartate 53. The CheB-type methylesterase domain maps to 145 to 334 (RAGGGPLIAI…AGELAALARI (190 aa)). Residues serine 157, histidine 184, and aspartate 277 contribute to the active site.

This sequence belongs to the CheB family. Post-translationally, phosphorylated by CheA. Phosphorylation of the N-terminal regulatory domain activates the methylesterase activity.

It is found in the cytoplasm. It catalyses the reaction [protein]-L-glutamate 5-O-methyl ester + H2O = L-glutamyl-[protein] + methanol + H(+). It carries out the reaction L-glutaminyl-[protein] + H2O = L-glutamyl-[protein] + NH4(+). Functionally, involved in chemotaxis. Part of a chemotaxis signal transduction system that modulates chemotaxis in response to various stimuli. Catalyzes the demethylation of specific methylglutamate residues introduced into the chemoreceptors (methyl-accepting chemotaxis proteins or MCP) by CheR. Also mediates the irreversible deamidation of specific glutamine residues to glutamic acid. The protein is Protein-glutamate methylesterase/protein-glutamine glutaminase 1 of Burkholderia lata (strain ATCC 17760 / DSM 23089 / LMG 22485 / NCIMB 9086 / R18194 / 383).